We begin with the raw amino-acid sequence, 449 residues long: Glycerol-3-phosphate acyltransferase 3 (449 aa).

Transmembrane regions (helical) follow at residues 9–29, 146–166, and 170–190; these read FVLLHVWMSIVAGLIVLPAMF, ISVRLTIIWGLGVFVRYCVLL, and ITLAVIGLSWLVIGTTLVGFL. The short motif at 238-243 is the HXXXXD motif element; the sequence is HTSPID. A helical transmembrane segment spans residues 358-378; it reads MVSYILRMMTSWAIVCNVWYL.

The protein belongs to the 1-acyl-sn-glycerol-3-phosphate acyltransferase family.

It localises to the endoplasmic reticulum membrane. It carries out the reaction sn-glycerol 3-phosphate + an acyl-CoA = a 1-acyl-sn-glycero-3-phosphate + CoA. The enzyme catalyses a 1-acyl-sn-glycero-3-phosphate + an acyl-CoA = a 1,2-diacyl-sn-glycero-3-phosphate + CoA. It catalyses the reaction dodecanoyl-CoA + sn-glycerol 3-phosphate = 1-dodecanoyl-sn-glycerol 3-phosphate + CoA. The catalysed reaction is sn-glycerol 3-phosphate + hexadecanoyl-CoA = 1-hexadecanoyl-sn-glycero-3-phosphate + CoA. It carries out the reaction sn-glycerol 3-phosphate + (9Z)-octadecenoyl-CoA = 1-(9Z-octadecenoyl)-sn-glycero-3-phosphate + CoA. The enzyme catalyses (9Z,12Z)-octadecadienoyl-CoA + sn-glycerol 3-phosphate = 1-(9Z,12Z)-octadecadienoyl-sn-glycero-3-phosphate + CoA. It catalyses the reaction 1-tetradecanoyl-sn-glycerol 3-phosphate + (9Z)-octadecenoyl-CoA = 1-tetradecanoyl-2-(9Z)-octadecenoyl-sn-glycero-3-phosphate + CoA. The catalysed reaction is 1-hexadecanoyl-sn-glycero-3-phosphate + (9Z)-octadecenoyl-CoA = 1-hexadecanoyl-2-(9Z-octadecenoyl)-sn-glycero-3-phosphate + CoA. It carries out the reaction 1-(9Z-octadecenoyl)-sn-glycero-3-phosphate + (9Z)-octadecenoyl-CoA = 1,2-di-(9Z-octadecenoyl)-sn-glycero-3-phosphate + CoA. The enzyme catalyses 1-(6Z,9Z,12Z-octadecatrienoyl)-sn-glycero-3-phosphate + (9Z)-octadecenoyl-CoA = (6Z,9Z,12Z)-octadecatrienoyl-2-(9Z)-octadecenoyl-sn-glycero-3-phosphate + CoA. It catalyses the reaction 1-(9Z,12Z,15Z)-octadecatrienoyl-sn-glycero-3-phosphate + (9Z)-octadecenoyl-CoA = 1-(9Z,12Z,15Z)-octadecatrienoyl-2-(9Z)-octadecenoyl-sn-glycero-3-phosphate + CoA. The catalysed reaction is 1-(9Z-octadecenoyl)-sn-glycero-3-phosphate + tetradecanoyl-CoA = 1-(9Z)-octadecenoyl-2-tetradecanoyl-sn-glycero-3-phosphate + CoA. It carries out the reaction 1-(9Z-octadecenoyl)-sn-glycero-3-phosphate + hexadecanoyl-CoA = 1-(9Z)-octadecenoyl-2-hexadecanoyl-sn-glycero-3-phosphate + CoA. The enzyme catalyses 1-(9Z-octadecenoyl)-sn-glycero-3-phosphate + octadecanoyl-CoA = 1-(9Z-octadecenoyl)-2-octadecanoyl-sn-glycero-3-phosphate + CoA. It catalyses the reaction 1-(9Z-octadecenoyl)-sn-glycero-3-phosphate + (9Z,12Z)-octadecadienoyl-CoA = 1-(9Z)-octadecenoyl-2-(9Z,12Z)-octadecadienoyl-sn-glycero-3-phosphate + CoA. The catalysed reaction is 1-(5Z,8Z,11Z,14Z-eicosatetraenoyl)-sn-glycero-3-phosphate + (9Z)-octadecenoyl-CoA = 1-(5Z,8Z,11Z,14Z)-eicosatetraenoyl-2-(9Z)-octadecenoyl-sn-glycero-3-phosphate + CoA. It participates in glycerolipid metabolism; triacylglycerol biosynthesis. The protein operates within phospholipid metabolism; CDP-diacylglycerol biosynthesis; CDP-diacylglycerol from sn-glycerol 3-phosphate: step 1/3. Functionally, converts glycerol-3-phosphate to 1-acyl-sn-glycerol-3-phosphate (lysophosphatidic acid or LPA) by incorporating an acyl moiety at the sn-1 position of the glycerol backbone. Also converts LPA into 1,2-diacyl-sn-glycerol-3-phosphate (phosphatidic acid or PA) by incorporating an acyl moiety at the sn-2 position of the glycerol backbone. Protects cells against lipotoxicity. The protein is Glycerol-3-phosphate acyltransferase 3 of Danio rerio (Zebrafish).